We begin with the raw amino-acid sequence, 872 residues long: Coatomer subunit gamma-2 (872 aa).

6 HEAT repeats span residues 64 to 101, 283 to 320, 321 to 355, 356 to 392, 395 to 430, and 467 to 504; these read MEATEAFFAMTRLFQSNDQTLRRMCYLTIKEMANISED, RELAPAVSVLQLFCSSPKPALRYAAVRTLNKVAMKHPS, AVTACNLDLENLITDSNRSIATLAITTLLKTGSES, SVDRLMKQISTFVSEISDEFKVVVVQAISALCQKYPR, SVMMTFLSNMLRDDGGFEYKRAIVDCIISIIEENPD, and PTPSKYIRFIFNRVVLENEAVRAAAVSALAKFGAQNEP.

This sequence belongs to the COPG family. Oligomeric complex.

It localises to the cytoplasm. The protein resides in the golgi apparatus membrane. The protein localises to the cytoplasmic vesicle. It is found in the COPI-coated vesicle membrane. Its function is as follows. The coatomer is a cytosolic protein complex that binds to dilysine motifs and reversibly associates with Golgi non-clathrin-coated vesicles, which further mediate biosynthetic protein transport from the ER, via the Golgi up to the trans Golgi network. Coatomer complex is required for budding from Golgi membranes, and is essential for the retrograde Golgi-to-ER transport of dilysine-tagged proteins. The polypeptide is Coatomer subunit gamma-2 (copg2) (Xenopus tropicalis (Western clawed frog)).